Reading from the N-terminus, the 185-residue chain is Large ribosomal subunit protein uL5 (185 aa).

This sequence belongs to the universal ribosomal protein uL5 family. As to quaternary structure, part of the 50S ribosomal subunit; part of the 5S rRNA/L5/L18/L25 subcomplex. Contacts the 5S rRNA and the P site tRNA. Forms a bridge to the 30S subunit in the 70S ribosome.

In terms of biological role, this is one of the proteins that bind and probably mediate the attachment of the 5S RNA into the large ribosomal subunit, where it forms part of the central protuberance. In the 70S ribosome it contacts protein S13 of the 30S subunit (bridge B1b), connecting the 2 subunits; this bridge is implicated in subunit movement. Contacts the P site tRNA; the 5S rRNA and some of its associated proteins might help stabilize positioning of ribosome-bound tRNAs. This is Large ribosomal subunit protein uL5 from Bacteroides thetaiotaomicron (strain ATCC 29148 / DSM 2079 / JCM 5827 / CCUG 10774 / NCTC 10582 / VPI-5482 / E50).